A 78-amino-acid chain; its full sequence is Acyl carrier protein (78 aa).

Residues 2–77 (SEIASRVKAI…DAVSYIEEHA (76 aa)) form the Carrier domain. The residue at position 37 (Ser37) is an O-(pantetheine 4'-phosphoryl)serine.

The protein belongs to the acyl carrier protein (ACP) family. In terms of processing, 4'-phosphopantetheine is transferred from CoA to a specific serine of apo-ACP by AcpS. This modification is essential for activity because fatty acids are bound in thioester linkage to the sulfhydryl of the prosthetic group.

It localises to the cytoplasm. The protein operates within lipid metabolism; fatty acid biosynthesis. Carrier of the growing fatty acid chain in fatty acid biosynthesis. This chain is Acyl carrier protein, found in Bacteroides thetaiotaomicron (strain ATCC 29148 / DSM 2079 / JCM 5827 / CCUG 10774 / NCTC 10582 / VPI-5482 / E50).